Consider the following 283-residue polypeptide: Release factor glutamine methyltransferase (283 aa).

Residues 120–124, D143, F172, and N187 each bind S-adenosyl-L-methionine; that span reads GTGSG. Position 187–190 (187–190) interacts with substrate; sequence NPPY.

This sequence belongs to the protein N5-glutamine methyltransferase family. PrmC subfamily.

It catalyses the reaction L-glutaminyl-[peptide chain release factor] + S-adenosyl-L-methionine = N(5)-methyl-L-glutaminyl-[peptide chain release factor] + S-adenosyl-L-homocysteine + H(+). Functionally, methylates the class 1 translation termination release factors RF1/PrfA and RF2/PrfB on the glutamine residue of the universally conserved GGQ motif. In Moorella thermoacetica (strain ATCC 39073 / JCM 9320), this protein is Release factor glutamine methyltransferase.